A 469-amino-acid polypeptide reads, in one-letter code: MNPNQKIITIGSVSLTIATVCFLMQIAILVTTVTLHFKQYECDSPANNQVMPCEPIIIERNITEIVYLTNTTIEKEICPKLVEYRNWSKPQCKITGFAPFSKDNSIRLSAGGDIWVTREPYVSCDPGKCYQFALGQGTTLDNKHSNDTIHDRIPHRTLLMNELGVPFHLGTRQVCIAWSSSSCHDGKAWLHVCVTGDDKNATASFIYDGRLVDSIGSWSQNILRTQESECVCINGTCTVVMTDGSASGRADTRILFIEEGKIVHISPLSGSAQHVEECSCYPRYPGVRCICRDNWKGSNRPVVDINVKDYSIDSRYVCSGLVGDTPRNNDRSSNSNCRNPNNERGNHGVKGWAFDDGNDVWMGRTISKDSRSGYETFKVIGGWSTPNSKSQINRQVIVDSDNRSGYSGIFSVESKSCINRCFYVELIRGREQETRVWWTSNSIVVFCGTSGTYGTGSWPDGADINLMPI.

Over 1-9 (MNPNQKIIT) the chain is Intravirion. A helical transmembrane segment spans residues 10–30 (IGSVSLTIATVCFLMQIAILV). Residues 11–33 (GSVSLTIATVCFLMQIAILVTTV) are involved in apical transport and lipid raft association. The Virion surface segment spans residues 31–469 (TTVTLHFKQY…DGADINLMPI (439 aa)). The segment at 36–88 (HFKQYECDSPANNQVMPCEPIIIERNITEIVYLTNTTIEKEICPKLVEYRNWS) is hypervariable stalk region. N-linked (GlcNAc...) asparagine; by host glycosylation is found at Asn61, Asn70, and Asn86. The head of neuraminidase stretch occupies residues 91-469 (QCKITGFAPF…DGADINLMPI (379 aa)). 8 cysteine pairs are disulfide-bonded: Cys92–Cys417, Cys124–Cys129, Cys183–Cys230, Cys232–Cys237, Cys278–Cys291, Cys280–Cys289, Cys318–Cys337, and Cys421–Cys447. Arg118 lines the substrate pocket. Asn146 carries an N-linked (GlcNAc...) asparagine; by host glycan. The Proton donor/acceptor role is filled by Asp151. Position 152 (Arg152) interacts with substrate. N-linked (GlcNAc...) asparagine; by host glycans are attached at residues Asn200 and Asn234. 276–277 (EE) is a substrate binding site. Position 292 (Arg292) interacts with substrate. Residues Asp293, Gly297, and Asp324 each contribute to the Ca(2+) site. A disordered region spans residues 326–350 (PRNNDRSSNSNCRNPNNERGNHGVK). The segment covering 331 to 343 (RSSNSNCRNPNNE) has biased composition (low complexity). Residue Arg371 coordinates substrate. An N-linked (GlcNAc...) asparagine; by host glycan is attached at Asn402. Tyr406 serves as the catalytic Nucleophile.

Belongs to the glycosyl hydrolase 34 family. As to quaternary structure, homotetramer. It depends on Ca(2+) as a cofactor. N-glycosylated.

The protein localises to the virion membrane. Its subcellular location is the host apical cell membrane. The catalysed reaction is Hydrolysis of alpha-(2-&gt;3)-, alpha-(2-&gt;6)-, alpha-(2-&gt;8)- glycosidic linkages of terminal sialic acid residues in oligosaccharides, glycoproteins, glycolipids, colominic acid and synthetic substrates.. With respect to regulation, inhibited by the neuraminidase inhibitors zanamivir (Relenza) and oseltamivir (Tamiflu). These drugs interfere with the release of progeny virus from infected cells and are effective against all influenza strains. Resistance to neuraminidase inhibitors is quite rare. In terms of biological role, catalyzes the removal of terminal sialic acid residues from viral and cellular glycoconjugates. Cleaves off the terminal sialic acids on the glycosylated HA during virus budding to facilitate virus release. Additionally helps virus spread through the circulation by further removing sialic acids from the cell surface. These cleavages prevent self-aggregation and ensure the efficient spread of the progeny virus from cell to cell. Otherwise, infection would be limited to one round of replication. Described as a receptor-destroying enzyme because it cleaves a terminal sialic acid from the cellular receptors. May facilitate viral invasion of the upper airways by cleaving the sialic acid moieties on the mucin of the airway epithelial cells. Likely to plays a role in the budding process through its association with lipid rafts during intracellular transport. May additionally display a raft-association independent effect on budding. Plays a role in the determination of host range restriction on replication and virulence. Sialidase activity in late endosome/lysosome traffic seems to enhance virus replication. The chain is Neuraminidase from Influenza A virus (strain A/Qu/7/1970 H3N2).